We begin with the raw amino-acid sequence, 457 residues long: Siroheme synthase (457 aa).

The precorrin-2 dehydrogenase /sirohydrochlorin ferrochelatase stretch occupies residues 1-204; sequence MDHLPIFCQL…NDQKAITETT (204 aa). Residues 22–23 and 43–44 each bind NAD(+); these read DV and LA. Residue Ser-128 is modified to Phosphoserine. A uroporphyrinogen-III C-methyltransferase region spans residues 216-457; that stretch reads GEVVLVGAGP…RDKLNWFSNH (242 aa). An S-adenosyl-L-methionine-binding site is contributed by Pro-225. The Proton acceptor role is filled by Asp-248. Lys-270 (proton donor) is an active-site residue. S-adenosyl-L-methionine is bound by residues 301–303, Ile-306, 331–332, Met-382, and Gly-411; these read GGD and TA.

In the N-terminal section; belongs to the precorrin-2 dehydrogenase / sirohydrochlorin ferrochelatase family. The protein in the C-terminal section; belongs to the precorrin methyltransferase family.

It carries out the reaction uroporphyrinogen III + 2 S-adenosyl-L-methionine = precorrin-2 + 2 S-adenosyl-L-homocysteine + H(+). The catalysed reaction is precorrin-2 + NAD(+) = sirohydrochlorin + NADH + 2 H(+). It catalyses the reaction siroheme + 2 H(+) = sirohydrochlorin + Fe(2+). Its pathway is cofactor biosynthesis; adenosylcobalamin biosynthesis; precorrin-2 from uroporphyrinogen III: step 1/1. It functions in the pathway cofactor biosynthesis; adenosylcobalamin biosynthesis; sirohydrochlorin from precorrin-2: step 1/1. It participates in porphyrin-containing compound metabolism; siroheme biosynthesis; precorrin-2 from uroporphyrinogen III: step 1/1. The protein operates within porphyrin-containing compound metabolism; siroheme biosynthesis; siroheme from sirohydrochlorin: step 1/1. Its pathway is porphyrin-containing compound metabolism; siroheme biosynthesis; sirohydrochlorin from precorrin-2: step 1/1. Its function is as follows. Multifunctional enzyme that catalyzes the SAM-dependent methylations of uroporphyrinogen III at position C-2 and C-7 to form precorrin-2 via precorrin-1. Then it catalyzes the NAD-dependent ring dehydrogenation of precorrin-2 to yield sirohydrochlorin. Finally, it catalyzes the ferrochelation of sirohydrochlorin to yield siroheme. In Escherichia coli O81 (strain ED1a), this protein is Siroheme synthase.